The chain runs to 574 residues: Protein OBERON 2 (574 aa).

Polar residues-rich tracts occupy residues 1–10 (MGTSSGSNHP) and 65–76 (SMSQKTEPDSME). A disordered region spans residues 1–76 (MGTSSGSNHP…SQKTEPDSME (76 aa)). The PHD-type zinc finger occupies 226–291 (LCMCTICNKF…VFKCRACNRT (66 aa)). The stretch at 416-524 (KKARMALETC…LFEKIKLQEN (109 aa)) forms a coiled coil.

As to quaternary structure, self-interacts. Interacts with OBE1, OBE3 and OBE4. Binds to VPg of pea seed borne mosaic virus (PSbMV), turnip mosaic virus (TuMV) and lettuce mosaic virus (LMV), but not with VPg of tobacco etch virus (TEV), cowpea mosaic virus (CPMV), tomato black ring virus (TBRV) and grapevine fan leaf virus (GFLV). As to expression, expressed in roots, seedlings, stems, leaves, flowers and siliques, especially in the vasculature.

The protein localises to the nucleus. Functionally, probable transcription factor that acts together with OBE1 for the maintenance and/or establishment of both the shoot and root meristems, probably by controlling the expression of the meristem genes such as WUS, PLT1 and PLT2 and of genes required for auxin responses. Promotes cell meristematic activity via the WUSCHEL-CLAVATA pathway. Involved in the development of the basal pole and in auxin-mediated root and vascular development in the embryo. Confers sensitivity to turnip mosaic virus (TuMV) probably by promoting viral movement and multiplication via interaction with TuMV VPg. The sequence is that of Protein OBERON 2 from Arabidopsis thaliana (Mouse-ear cress).